The sequence spans 24 residues: Caerulein precursor fragment BM1 (24 aa).

As to expression, expressed by the skin glands.

Its subcellular location is the secreted. Functionally, antimicrobial peptide. The chain is Caerulein precursor fragment BM1 from Xenopus boumbaensis (Mawa clawed frog).